Reading from the N-terminus, the 151-residue chain is Secreted RxLR effector protein 30 (151 aa).

A signal peptide spans 1–19 (MRSSTILIVLGIAILAVNG). Residues 38–53 (RLLRSTSTEHETDEER) carry the RxLR-dEER motif.

The protein belongs to the RxLR effector family.

It localises to the secreted. The protein resides in the host nucleus. In terms of biological role, effector that acts as a broad suppressor of cell death to interrupt plant immunity. Inhibits cell death induced by cell death-inducing proteins, including the PAMP elicitor INF1 from P.infestans. This Plasmopara viticola (Downy mildew of grapevine) protein is Secreted RxLR effector protein 30.